The primary structure comprises 430 residues: Serine hydroxymethyltransferase (430 aa).

(6S)-5,6,7,8-tetrahydrofolate is bound by residues Leu-126 and 130 to 132; that span reads GHL. Lys-235 carries the N6-(pyridoxal phosphate)lysine modification.

The protein belongs to the SHMT family. As to quaternary structure, homodimer. Pyridoxal 5'-phosphate serves as cofactor.

The protein localises to the cytoplasm. It carries out the reaction (6R)-5,10-methylene-5,6,7,8-tetrahydrofolate + glycine + H2O = (6S)-5,6,7,8-tetrahydrofolate + L-serine. Its pathway is one-carbon metabolism; tetrahydrofolate interconversion. It functions in the pathway amino-acid biosynthesis; glycine biosynthesis; glycine from L-serine: step 1/1. Catalyzes the reversible interconversion of serine and glycine with tetrahydrofolate (THF) serving as the one-carbon carrier. This reaction serves as the major source of one-carbon groups required for the biosynthesis of purines, thymidylate, methionine, and other important biomolecules. Also exhibits THF-independent aldolase activity toward beta-hydroxyamino acids, producing glycine and aldehydes, via a retro-aldol mechanism. This Leifsonia xyli subsp. xyli (strain CTCB07) protein is Serine hydroxymethyltransferase.